The primary structure comprises 264 residues: Tropinone reductase homolog At5g06060 (264 aa).

An NADP(+)-binding site is contributed by 15–39 (LVTGGTRGIGRAVVEELAKFGAKVH). Residue serine 148 coordinates substrate. The Proton acceptor role is filled by tyrosine 161.

This sequence belongs to the short-chain dehydrogenases/reductases (SDR) family. SDR65C subfamily.

This Arabidopsis thaliana (Mouse-ear cress) protein is Tropinone reductase homolog At5g06060.